The chain runs to 101 residues: Urease subunit beta (101 aa).

This sequence belongs to the urease beta subunit family. In terms of assembly, heterotrimer of UreA (gamma), UreB (beta) and UreC (alpha) subunits. Three heterotrimers associate to form the active enzyme.

It localises to the cytoplasm. It catalyses the reaction urea + 2 H2O + H(+) = hydrogencarbonate + 2 NH4(+). It functions in the pathway nitrogen metabolism; urea degradation; CO(2) and NH(3) from urea (urease route): step 1/1. This is Urease subunit beta from Cupriavidus necator (strain ATCC 17699 / DSM 428 / KCTC 22496 / NCIMB 10442 / H16 / Stanier 337) (Ralstonia eutropha).